Here is a 1337-residue protein sequence, read N- to C-terminus: MEYPQIDLYEFLTESELQQYYNAVKNELKITNAAQFKYAADEDLRFIGLSRPEIRRLRKFYEKHFPHSYLSKIKRLLQAPGTMVKREEAPGGGSQVALDGSSASACSSLAAKNGASSPSKVPNNKHIIPADSISVNKQLGTGEFGIVQQGVWSNGNERIQVAIKCLCRERMQSNPMEFLKEAAIMHSIEHENIVRLYGVVLATDSLMLVTELAHLRSLLECLKDSGLRVSFLTIPTLCEFALQICNGMRYLEQKRLIHRDLAARNILVFSKDKVKISDFGLSRALGVGKDYYKTNFNVNLKLPIAWCAPECINYLRFTNASDVWAFGVCLWEMFSYGFQPWAALTGLQILEAIDAPNYQRLEQPDCCPSEYYTLMMKCWQDDAAKRPRFGEIYDQLPDMKPEQLKAVVNCTEPKKDHLLYRQGDIISVLDRNTGTPFWKGVLSTGKTGYFNPSNTVAFLEGLPSSTRDSFSRVSDHRISKRKLRTEMISKPQNDFKHTGHVGIDGATFGDIAFLGSSQNYNHVPKQIVTPYKPSEDIEQTPLLLPPTPTSPDSLQTASGYFPEGANSGGAMGTSMNPTFIPSAEHTPKLIATNGQSSFDFASGSTNPFFPNRGDDELEFGLHNYGADGKSVHSETGWRPTSRSIVDDPHEYHEISDDEIAADKLDFGPSLLDEINSMFGSISAATGSHPKSPGFDHVNNKNEITEMSAKLGQKSGDTNGNKHGHGLLPTLSKKKSSGTVKPISVKDEKILNHAIEIANEISARSMIDLVSDQTPVIHSPKRKFSFRFPHLSNNGSGDKSGGLGTSGSAHTPTHGNASPFPKKKNFTEELQSIPDIQSLIGKEGLEAYNSLIERKALLDIGPSPAATLLRHLDTDEFDLQSLHQSQRPMTLPTRGATQRVRKAELAAGLSRHNDENSNSLEACESPSYMTHGSYKFPEAQPTEQLPEPESPNPIPLPPREGKKQVKTSTKRHVRKYPLIIPANGLQRTLSKLADFGDEAAKSPEISTSSQPQPGRAIEVVAAVRPSGMRRPSRPSEREYENMPTVGKESAHTYQNLDKLTPADAAGLTDTASLQFESIMEADTSKEGILQSPDVTDGFYNFSIQKEHYNKGKDAEFEATQISGLYVNDDELRNLDIESSRRTATPCSSCSALESEHSQPDALPSTESVSEVSRFSSVDNELAGNALFKKVRASVNMAMNRKSVAETSLTSNQPGGASAKPQTEAEYFAATAARLADSNSVSCEDLLEFSDKKPKGCERGVDSDEVRIMVKVLGKDSTPNRCLGALEFINWDVHKSIKLIKLQNLVSEANLSLEASFEALQQHEWDLHTTAHKLNGLKL.

Ser-71 is modified (phosphoserine). The region spanning 133-399 (ISVNKQLGTG…GEIYDQLPDM (267 aa)) is the Protein kinase domain. ATP contacts are provided by residues 139 to 147 (LGTGEFGIV) and Lys-164. The active-site Proton acceptor is Asp-260. Tyr-291 and Tyr-292 each carry phosphotyrosine. The SH3 domain occupies 399 to 460 (MKPEQLKAVV…NPSNTVAFLE (62 aa)). The 15-residue stretch at 488–502 (ISKPQNDFKHTGHVG) folds into the CRIB domain. Residues 714–739 (SGDTNGNKHGHGLLPTLSKKKSSGTV) are disordered. A phosphoserine mark is found at Ser-764 and Ser-778. The segment at 786-822 (RFPHLSNNGSGDKSGGLGTSGSAHTPTHGNASPFPKK) is disordered. A compositionally biased stretch (polar residues) spans 805-815 (SGSAHTPTHGN). 3 positions are modified to phosphoserine: Ser-831, Ser-918, and Ser-924. Disordered regions lie at residues 906–969 (AGLS…TSTK) and 1024–1045 (PSGM…PTVG). The span at 947 to 957 (PESPNPIPLPP) shows a compositional bias: pro residues.

Belongs to the protein kinase superfamily. Tyr protein kinase family.

It carries out the reaction L-tyrosyl-[protein] + ATP = O-phospho-L-tyrosyl-[protein] + ADP + H(+). Likely to act as a downstream effector of Cdc42 during dorsal closure, acting in a kinase independent manner with the other ACK family member Ack to positively regulate expression of the myosin zip by promoting the endocytosis of Egfr in the amnioserosa (AS). The protein is Activated Cdc42 kinase-like of Drosophila melanogaster (Fruit fly).